A 248-amino-acid chain; its full sequence is UPF0273 protein APE_1505.1 (248 aa).

One can recognise a KaiC domain in the interval 3–247 (DRVKTGIPGM…VVRIGRRVSI (245 aa)). ATP is bound at residue 30–37 (GGPGTGKS).

This sequence belongs to the UPF0273 family.

The protein is UPF0273 protein APE_1505.1 of Aeropyrum pernix (strain ATCC 700893 / DSM 11879 / JCM 9820 / NBRC 100138 / K1).